The chain runs to 160 residues: Protein MGF 300-2R (160 aa).

This sequence belongs to the asfivirus MGF 300 family.

Plays a role in virus cell tropism, and may be required for efficient virus replication in macrophages. The chain is Protein MGF 300-2R from Ornithodoros (relapsing fever ticks).